The sequence spans 1331 residues: Serine/threonine-protein kinase SSK22 (1331 aa).

Residues 1034 to 1310 (WQKRSFIGGG…AVELLIDPWM (277 aa)) form the Protein kinase domain. ATP is bound by residues 1040 to 1048 (IGGGTFGQV) and lysine 1063. Aspartate 1158 (proton acceptor) is an active-site residue.

Belongs to the protein kinase superfamily. STE Ser/Thr protein kinase family. MAP kinase kinase kinase subfamily. Interacts with by SSK1.

It catalyses the reaction L-seryl-[protein] + ATP = O-phospho-L-seryl-[protein] + ADP + H(+). The catalysed reaction is L-threonyl-[protein] + ATP = O-phospho-L-threonyl-[protein] + ADP + H(+). Kinase involved in a signal transduction pathway that is activated by changes in the osmolarity of the extracellular environment. Activates the PBS2 MAP kinase kinase by phosphorylation. In Saccharomyces cerevisiae (strain ATCC 204508 / S288c) (Baker's yeast), this protein is Serine/threonine-protein kinase SSK22 (SSK22).